The primary structure comprises 192 residues: Protein GrpE (192 aa).

The protein belongs to the GrpE family. As to quaternary structure, homodimer.

The protein localises to the cytoplasm. Its function is as follows. Participates actively in the response to hyperosmotic and heat shock by preventing the aggregation of stress-denatured proteins, in association with DnaK and GrpE. It is the nucleotide exchange factor for DnaK and may function as a thermosensor. Unfolded proteins bind initially to DnaJ; upon interaction with the DnaJ-bound protein, DnaK hydrolyzes its bound ATP, resulting in the formation of a stable complex. GrpE releases ADP from DnaK; ATP binding to DnaK triggers the release of the substrate protein, thus completing the reaction cycle. Several rounds of ATP-dependent interactions between DnaJ, DnaK and GrpE are required for fully efficient folding. This chain is Protein GrpE, found in Neisseria gonorrhoeae (strain ATCC 700825 / FA 1090).